The chain runs to 185 residues: Elongation factor P (185 aa).

It belongs to the elongation factor P family.

Its subcellular location is the cytoplasm. It participates in protein biosynthesis; polypeptide chain elongation. Involved in peptide bond synthesis. Stimulates efficient translation and peptide-bond synthesis on native or reconstituted 70S ribosomes in vitro. Probably functions indirectly by altering the affinity of the ribosome for aminoacyl-tRNA, thus increasing their reactivity as acceptors for peptidyl transferase. This chain is Elongation factor P, found in Clostridium perfringens (strain ATCC 13124 / DSM 756 / JCM 1290 / NCIMB 6125 / NCTC 8237 / Type A).